Reading from the N-terminus, the 127-residue chain is Glycine cleavage system H protein (127 aa).

The Lipoyl-binding domain occupies 24-106 (VVTVGVTFHA…YGAGWFFKLK (83 aa)). Residue K65 is modified to N6-lipoyllysine.

It belongs to the GcvH family. As to quaternary structure, the glycine cleavage system is composed of four proteins: P, T, L and H. (R)-lipoate is required as a cofactor.

The glycine cleavage system catalyzes the degradation of glycine. The H protein shuttles the methylamine group of glycine from the P protein to the T protein. The chain is Glycine cleavage system H protein from Laribacter hongkongensis (strain HLHK9).